The following is a 123-amino-acid chain: Fluoride-specific ion channel FluC (123 aa).

4 consecutive transmembrane segments (helical) span residues 3 to 23 (IAWV…LSNA), 34 to 54 (WGTL…FYLF), 67 to 87 (LVLV…LETL), and 99 to 119 (LLNM…GLVV). Na(+)-binding residues include Gly-74 and Thr-77.

It belongs to the fluoride channel Fluc/FEX (TC 1.A.43) family.

It localises to the cell inner membrane. The catalysed reaction is fluoride(in) = fluoride(out). Its activity is regulated as follows. Na(+) is not transported, but it plays an essential structural role and its presence is essential for fluoride channel function. Fluoride-specific ion channel. Important for reducing fluoride concentration in the cell, thus reducing its toxicity. This is Fluoride-specific ion channel FluC from Magnetococcus marinus (strain ATCC BAA-1437 / JCM 17883 / MC-1).